Reading from the N-terminus, the 450-residue chain is tRNA-aminoacylation cofactor arc1 (450 aa).

A disordered region spans residues 208 to 278; the sequence is QRPSVIKKDK…KEPPKAATPV (71 aa). Composition is skewed to basic and acidic residues over residues 213–225 and 233–247; these read IKKD…EGKP and SVEK…AKKE. Positions 248 to 261 are enriched in basic residues; sequence KQNKKEKKDKKDKK. Residues 262–272 show a composition bias toward basic and acidic residues; the sequence is DKKEKAPKEPP. A tRNA-binding domain is found at 278–382; the sequence is VPSMIDFRIG…ENAEIGDRLT (105 aa).

This sequence belongs to the tRNA-aminoacylation cofactor ARC1 family. In terms of assembly, component of a yeast aminoacyl-tRNA synthase (aaRS) complex formed by methionyl-tRNA synthase, glutamyl-tRNA synthase and the tRNA aminoacylation cofactor arc1 in a stoichiometric complex. Interacts with rar1/mes1 and gus1.

It is found in the cytoplasm. Binds to tRNA and functions as a cofactor for the methionyl-tRNA synthetase (MetRS) and glutamyl-tRNA synthetase (GluRS). Forms a complex with MetRS and GluRS and increases their affinity for cognate tRNAs due to the presence of a tRNA binding domain in its middle and C-terminal part. This is tRNA-aminoacylation cofactor arc1 from Schizosaccharomyces pombe (strain 972 / ATCC 24843) (Fission yeast).